The primary structure comprises 315 residues: NADH-cytochrome b5 reductase-like (315 aa).

The Oxidoreductase-like domain occupies 19 to 55 (RPTEPLPSQCCGSGCSPCVFDLYHRDLARWEAAQASK). The FAD-binding FR-type domain maps to 75 to 177 (ETFVAFCIIA…RGPFGDFFYK (103 aa)). Residues 157–172 (ESWRVGDTAFWRGPFG) and 182–214 (GELLLLAAGTGLAPMVPILQSITDNENDETFVT) each bind FAD.

Belongs to the flavoprotein pyridine nucleotide cytochrome reductase family. FAD serves as cofactor.

It carries out the reaction 2 Fe(III)-[cytochrome b5] + NADH = 2 Fe(II)-[cytochrome b5] + NAD(+) + H(+). Its function is as follows. NADH-cytochrome b5 reductases are involved in desaturation and elongation of fatty acids, cholesterol biosynthesis, drug metabolism, and, in erythrocyte, methemoglobin reduction. The chain is NADH-cytochrome b5 reductase-like (CYB5RL) from Homo sapiens (Human).